The primary structure comprises 638 residues: Guanylate-binding protein 7 (638 aa).

The GTPase domain (Globular) stretch occupies residues Met1–Cys310. The region spanning Thr35–Lys277 is the GB1/RHD3-type G domain. GTP-binding positions include Gly45–Ser52, Leu67–Thr69, and Asp97–Leu101. The tract at residues Leu311–Leu638 is interaction with the CYBA-CYBB complex. The interval Ser590–Leu638 is C-terminal tail; required for its localization to cytoplasmic vesicle.

It belongs to the TRAFAC class dynamin-like GTPase superfamily. GB1/RHD3 GTPase family. GB1 subfamily. Monomer and dimer. Interacts with CYBA, CYBA-CYBB complex and ATG4B. Interacts (via GB1/RHD3-type G domain) with NCF2 and NCF2-NCF4 complex.

It is found in the cytoplasmic vesicle membrane. The catalysed reaction is GTP + H2O = GDP + phosphate + H(+). It carries out the reaction GDP + H2O = GMP + phosphate + H(+). Its activity is regulated as follows. Inhibited by orthovanadate, berylium fluoride and aluminum flouride. Functionally, interferon (IFN)-inducible GTPase that plays important roles in innate immunity against a diverse range of bacterial, viral and protozoan pathogens. Hydrolyzes GTP to GMP in two consecutive cleavage reactions and predominantly uses GTP and not GDP or GMP as the substrate. Following infection, recruited to the pathogen-containing vacuoles or vacuole-escaped bacteria and acts as a positive regulator of inflammasome assembly by promoting the release of inflammasome ligands from bacteria. Acts by promoting lysis of pathogen-containing vacuoles, releasing pathogens into the cytosol. Following pathogen release in the cytosol, promotes recruitment of proteins that mediate bacterial cytolysis, such as Gm12250/Irgb10: this liberates ligands that are detected by inflammasomes, such as lipopolysaccharide (LPS) that activates the non-canonical CASP4/CASP11 inflammasome or double-stranded DNA (dsDNA) that activates the AIM2 inflammasome. Also promotes IFN-gamma-mediated host defense against bacterial infections by regulating oxidative responses and bacteriolytic peptide generation. May help to assemble NADPH oxidase on phagosomal membranes by acting as a bridging protein between NADPH oxidase cytosolic subunits NCF2-NCF4 and the membrane subunits CYBA-CYBB. Participates along with GBP1 in trafficking monoubiquinated protein cargo to autolysosomes for generating ubiquitin-derived antimicrobial peptides. Facilitates influenza A virus replication by inhibiting the activation of NF-kappaB and JAK-STAT signaling pathways and the expression of type I, type III interferons and pro-inflammatory cytokines. Confers protection to several pathogens, including the bacterial pathogens Listeria monocytogenes and Mycobacterium bovis BCG as well as the protozoan pathogen Toxoplasma gondii. Required for disruption of the parasitophorous vacuole formed following T.gondii infection and subsequent killing of the parasite. The chain is Guanylate-binding protein 7 (Gbp7) from Mus musculus (Mouse).